The following is a 466-amino-acid chain: 3-isopropylmalate dehydratase large subunit (466 aa).

Cys-347, Cys-407, and Cys-410 together coordinate [4Fe-4S] cluster.

It belongs to the aconitase/IPM isomerase family. LeuC type 1 subfamily. In terms of assembly, heterodimer of LeuC and LeuD. The cofactor is [4Fe-4S] cluster.

The enzyme catalyses (2R,3S)-3-isopropylmalate = (2S)-2-isopropylmalate. It functions in the pathway amino-acid biosynthesis; L-leucine biosynthesis; L-leucine from 3-methyl-2-oxobutanoate: step 2/4. Its function is as follows. Catalyzes the isomerization between 2-isopropylmalate and 3-isopropylmalate, via the formation of 2-isopropylmaleate. The chain is 3-isopropylmalate dehydratase large subunit from Serratia proteamaculans (strain 568).